Reading from the N-terminus, the 45-residue chain is Large ribosomal subunit protein bL34 (45 aa).

It belongs to the bacterial ribosomal protein bL34 family.

The sequence is that of Large ribosomal subunit protein bL34 from Opitutus terrae (strain DSM 11246 / JCM 15787 / PB90-1).